The primary structure comprises 298 residues: MPSLKSLKTRVSSIKSISKITRAMQMVASAKLRRAESRLAAARPYAKRMAQVMSLLAARAAGTPNALPLLNGRGKDQTHLLIVTSSDAGLCGGFNSNIYRQARDRALALEAAGKTVQFYVIGIKNAPVIRNNFPGKTIHETKREETSPVTFENAQKIAQDLIQRFNAGEFDVAHLFFSHYHSVLSQVPTETQIIPAAPEGDDTKNQAAANDASSGAIEFEPDEETILSTLLPRSIAVAIYQAMLENATSEQGSRMSAMENSTRNAGEMISKLSIQYNRLRQAAITTELVEIISGAEAL.

The protein belongs to the ATPase gamma chain family. F-type ATPases have 2 components, CF(1) - the catalytic core - and CF(0) - the membrane proton channel. CF(1) has five subunits: alpha(3), beta(3), gamma(1), delta(1), epsilon(1). CF(0) has three main subunits: a, b and c.

The protein resides in the cell inner membrane. In terms of biological role, produces ATP from ADP in the presence of a proton gradient across the membrane. The gamma chain is believed to be important in regulating ATPase activity and the flow of protons through the CF(0) complex. The protein is ATP synthase gamma chain of Zymomonas mobilis subsp. mobilis (strain ATCC 31821 / ZM4 / CP4).